The sequence spans 422 residues: Adhesin YadA (422 aa).

Positions 1–25 (MTKDFKISVSAALISALFSSPYAFA) are cleaved as a signal peptide. Residues 26–330 (NNDEVHFTAV…KKAIRESNQY (305 aa)) are surface exposed passenger domain. The stretch at 216-362 (EKTQENANKK…LASSAALNSL (147 aa)) forms a coiled coil. The outer membrane translocation of the passenger domain stretch occupies residues 331-369 (TDHKFHQLDNRLDKLDTRVDKGLASSAALNSLFQPYGVG). 4 beta stranded membrane passes run 369 to 379 (GKVNFTAGVGG), 383 to 394 (SQALAIGSGYRV), 401 to 407 (KAGVAYA), and 411 to 422 (DVMYNASFNIEW). Residues 370–422 (KVNFTAGVGGYRSSQALAIGSGYRVNESVALKAGVAYAGSSDVMYNASFNIEW) form a translocator domain region.

This sequence belongs to the autotransporter-2 (AT-2) (TC 1.B.40) family. In terms of assembly, homotrimer.

It localises to the cell surface. It is found in the cell outer membrane. Functionally, collagen-binding outer membrane protein forming a fibrillar matrix on the bacterial cell surface. Promotes initial attachment and invasion of eukaryotic cells. Also protects the bacteria by being responsible for agglutination, serum resistance, complement inactivation and phagocytosis resistance. The polypeptide is Adhesin YadA (yadA) (Yersinia enterocolitica).